A 205-amino-acid chain; its full sequence is DNA-directed RNA polymerase subunit 5 (205 aa).

This sequence belongs to the archaeal Rpo5/eukaryotic RPB5 RNA polymerase subunit family.

The protein resides in the virion. The catalysed reaction is RNA(n) + a ribonucleoside 5'-triphosphate = RNA(n+1) + diphosphate. Functionally, DNA-dependent RNA polymerase catalyzes the transcription of DNA into RNA using the four ribonucleoside triphosphates as substrates. This Acanthamoeba polyphaga (Amoeba) protein is DNA-directed RNA polymerase subunit 5.